Here is a 438-residue protein sequence, read N- to C-terminus: Serine hydroxymethyltransferase (438 aa).

(6S)-5,6,7,8-tetrahydrofolate contacts are provided by residues leucine 133 and 137–139 (GHL). The residue at position 242 (lysine 242) is an N6-(pyridoxal phosphate)lysine.

This sequence belongs to the SHMT family. In terms of assembly, homodimer. Pyridoxal 5'-phosphate is required as a cofactor.

The protein resides in the cytoplasm. The enzyme catalyses (6R)-5,10-methylene-5,6,7,8-tetrahydrofolate + glycine + H2O = (6S)-5,6,7,8-tetrahydrofolate + L-serine. It functions in the pathway one-carbon metabolism; tetrahydrofolate interconversion. Its pathway is amino-acid biosynthesis; glycine biosynthesis; glycine from L-serine: step 1/1. Its function is as follows. Catalyzes the reversible interconversion of serine and glycine with tetrahydrofolate (THF) serving as the one-carbon carrier. This reaction serves as the major source of one-carbon groups required for the biosynthesis of purines, thymidylate, methionine, and other important biomolecules. Also exhibits THF-independent aldolase activity toward beta-hydroxyamino acids, producing glycine and aldehydes, via a retro-aldol mechanism. In Brucella melitensis biotype 2 (strain ATCC 23457), this protein is Serine hydroxymethyltransferase.